Consider the following 791-residue polypeptide: Nuclear cap-binding protein subunit 1 (791 aa).

Basic and acidic residues predominate over residues 1–14 (MSRRRHSDENDGGP). Residues 1-24 (MSRRRHSDENDGGPHHKRRKTSEP) form a disordered region. One can recognise an MIF4G domain in the interval 28 to 240 (EDRLESLICR…CLWAQIQKLK (213 aa)). Positions 641–714 (LHSTIRKMNK…SEQKNLFLVI (74 aa)) form a coiled coil. The disordered stretch occupies residues 668–687 (KQHKHRDSDDNDEDSGRKDG).

The protein belongs to the NCBP1 family. In terms of assembly, component of the nuclear cap-binding complex (CBC), a heterodimer composed of ncbp1/cbp80 and ncbp2/cbp20 that interacts with m7GpppG-capped RNA. Component of an alternative nuclear cap-binding complex (CBC) composed of ncbp1/cbp80 and ncbp3.

Its subcellular location is the nucleus. The protein resides in the cytoplasm. Its function is as follows. Component of the cap-binding complex (CBC), which binds cotranscriptionally to the 5'-cap of pre-mRNAs and is involved in various processes such as pre-mRNA splicing, translation regulation, nonsense-mediated mRNA decay, RNA-mediated gene silencing (RNAi) by microRNAs (miRNAs) and mRNA export. The CBC complex is involved in mRNA export from the nucleus, leading to the recruitment of the mRNA export machinery to the 5'-end of mRNA and to mRNA export in a 5' to 3' direction through the nuclear pore. The CBC complex is also involved in mediating U snRNA and intronless mRNAs export from the nucleus. The CBC complex is essential for a pioneer round of mRNA translation, before steady state translation when the CBC complex is replaced by cytoplasmic cap-binding protein eIF4E. The pioneer round of mRNA translation mediated by the CBC complex plays a central role in nonsense-mediated mRNA decay (NMD), NMD only taking place in mRNAs bound to the CBC complex, but not on eIF4E-bound mRNAs. The CBC complex enhances NMD in mRNAs containing at least one exon-junction complex (EJC), promoting the interaction between UPF1 and UPF2. The CBC complex is also involved in 'failsafe' NMD, which is independent of the EJC complex, while it does not participate in Staufen-mediated mRNA decay (SMD). During cell proliferation, the CBC complex is also involved in microRNAs (miRNAs) biogenesis via its interaction with SRRT/ARS2 and is required for miRNA-mediated RNA interference. The CBC complex also acts as a negative regulator of parn, thereby acting as an inhibitor of mRNA deadenylation. In the CBC complex, ncbp1/cbp80 does not bind directly capped RNAs (m7GpppG-capped RNA) but is required to stabilize the movement of the N-terminal loop of ncbp2/cbp20 and lock the CBC into a high affinity cap-binding state with the cap structure. Associates with NCBP3 to form an alternative cap-binding complex (CBC) which plays a key role in mRNA export. The conventional CBC with NCBP2 binds both small nuclear RNA (snRNA) and messenger (mRNA) and is involved in their export from the nucleus whereas the alternative CBC with NCBP3 does not bind snRNA and associates only with mRNA thereby playing a role only in mRNA export. This Xenopus tropicalis (Western clawed frog) protein is Nuclear cap-binding protein subunit 1 (ncbp1).